A 234-amino-acid chain; its full sequence is Zein-alpha GZ19AB11 (234 aa).

Positions 1-21 (MAAKIFCLLMLLGLSASAATA) are cleaved as a signal peptide.

Belongs to the zein family.

Functionally, zeins are major seed storage proteins. The polypeptide is Zein-alpha GZ19AB11 (Zea mays (Maize)).